The following is a 236-amino-acid chain: Large ribosomal subunit protein uL3 (236 aa).

The segment covering 139–149 (SVSHRSHGSTG) has biased composition (low complexity). Residues 139–165 (SVSHRSHGSTGQRQDPGKVFKGKKMAG) form a disordered region. Gln152 bears the N5-methylglutamine mark.

The protein belongs to the universal ribosomal protein uL3 family. In terms of assembly, part of the 50S ribosomal subunit. Forms a cluster with proteins L14 and L19. Methylated by PrmB.

Functionally, one of the primary rRNA binding proteins, it binds directly near the 3'-end of the 23S rRNA, where it nucleates assembly of the 50S subunit. The protein is Large ribosomal subunit protein uL3 of Pelagibacter ubique (strain HTCC1062).